A 37-amino-acid polypeptide reads, in one-letter code: Large ribosomal subunit protein bL36 (37 aa).

This sequence belongs to the bacterial ribosomal protein bL36 family.

The polypeptide is Large ribosomal subunit protein bL36 (Treponema pallidum (strain Nichols)).